Here is a 514-residue protein sequence, read N- to C-terminus: Type-2 serine--tRNA ligase (514 aa).

Residue alanine 313 coordinates L-serine. Residue cysteine 315 coordinates Zn(2+). Position 344 (arginine 344) interacts with L-serine. ATP is bound by residues 344–346 (RWE) and 355–356 (RV). Position 361 to 363 (361 to 363 (RGE)) interacts with L-serine. The Zn(2+) site is built by glutamate 363 and cysteine 470. Arginine 477 is an ATP binding site.

This sequence belongs to the class-II aminoacyl-tRNA synthetase family. Type-2 seryl-tRNA synthetase subfamily. As to quaternary structure, homodimer. It depends on Zn(2+) as a cofactor.

It is found in the cytoplasm. The enzyme catalyses tRNA(Ser) + L-serine + ATP = L-seryl-tRNA(Ser) + AMP + diphosphate + H(+). The catalysed reaction is tRNA(Sec) + L-serine + ATP = L-seryl-tRNA(Sec) + AMP + diphosphate + H(+). It participates in aminoacyl-tRNA biosynthesis; selenocysteinyl-tRNA(Sec) biosynthesis; L-seryl-tRNA(Sec) from L-serine and tRNA(Sec): step 1/1. Its function is as follows. Catalyzes the attachment of serine to tRNA(Ser). Is also able to aminoacylate tRNA(Sec) with serine, to form the misacylated tRNA L-seryl-tRNA(Sec), which will be further converted into selenocysteinyl-tRNA(Sec). The chain is Type-2 serine--tRNA ligase (serS) from Methanococcus maripaludis (strain DSM 14266 / JCM 13030 / NBRC 101832 / S2 / LL).